A 196-amino-acid polypeptide reads, in one-letter code: HTH-type transcriptional regulator BetI (196 aa).

The HTH tetR-type domain occupies 8–68 (PVRREQLIRA…AAMRQILREL (61 aa)). Positions 31–50 (TVATIAKKAGLSSGIVAHYF) form a DNA-binding region, H-T-H motif.

Its pathway is amine and polyamine biosynthesis; betaine biosynthesis via choline pathway [regulation]. In terms of biological role, repressor involved in the biosynthesis of the osmoprotectant glycine betaine. It represses transcription of the choline transporter BetT and the genes of BetAB involved in the synthesis of glycine betaine. In Stenotrophomonas maltophilia (strain R551-3), this protein is HTH-type transcriptional regulator BetI.